Reading from the N-terminus, the 354-residue chain is Maleylacetate reductase 1 (354 aa).

Belongs to the iron-containing alcohol dehydrogenase family. As to quaternary structure, homodimer.

It catalyses the reaction 3-oxoadipate + NAD(+) = maleylacetate + NADH + H(+). It carries out the reaction 3-oxoadipate + NADP(+) = maleylacetate + NADPH + H(+). It participates in aromatic compound metabolism; 3-chlorocatechol degradation. The sequence is that of Maleylacetate reductase 1 (tfdFI) from Cupriavidus pinatubonensis (strain JMP 134 / LMG 1197) (Cupriavidus necator (strain JMP 134)).